An 88-amino-acid chain; its full sequence is MASKEFHIVAETGIHARPATLLVQTASKFTSEITLEYKGKSVNLKSIMGVMSLGVGQGADVTISAEGADADDAIATIAETMTKEGLAE.

One can recognise an HPr domain in the interval 1 to 88; that stretch reads MASKEFHIVA…ETMTKEGLAE (88 aa). The active-site Pros-phosphohistidine intermediate is the His15. Phosphoserine; by HPrK/P is present on Ser46.

It belongs to the HPr family.

It localises to the cytoplasm. Its activity is regulated as follows. Phosphorylation on Ser-46 inhibits the phosphoryl transfer from enzyme I to HPr. General (non sugar-specific) component of the phosphoenolpyruvate-dependent sugar phosphotransferase system (sugar PTS). This major carbohydrate active-transport system catalyzes the phosphorylation of incoming sugar substrates concomitantly with their translocation across the cell membrane. The phosphoryl group from phosphoenolpyruvate (PEP) is transferred to the phosphoryl carrier protein HPr by enzyme I. Phospho-HPr then transfers it to the PTS EIIA domain. In terms of biological role, P-Ser-HPr interacts with the catabolite control protein A (CcpA), forming a complex that binds to DNA at the catabolite response elements cre, operator sites preceding a large number of catabolite-regulated genes. Thus, P-Ser-HPr is a corepressor in carbon catabolite repression (CCR), a mechanism that allows bacteria to coordinate and optimize the utilization of available carbon sources. P-Ser-HPr also plays a role in inducer exclusion, in which it probably interacts with several non-PTS permeases and inhibits their transport activity. In Lactococcus lactis subsp. cremoris (Streptococcus cremoris), this protein is Phosphocarrier protein HPr (ptsH).